The primary structure comprises 183 residues: Large ribosomal subunit protein uL6 (183 aa).

Belongs to the universal ribosomal protein uL6 family. In terms of assembly, part of the 50S ribosomal subunit.

Its function is as follows. This protein binds to the 23S rRNA, and is important in its secondary structure. It is located near the subunit interface in the base of the L7/L12 stalk, and near the tRNA binding site of the peptidyltransferase center. The protein is Large ribosomal subunit protein uL6 of Chlamydia trachomatis serovar L2 (strain ATCC VR-902B / DSM 19102 / 434/Bu).